A 327-amino-acid polypeptide reads, in one-letter code: Dipeptide transport ATP-binding protein DppF (327 aa).

The region spanning 12 to 261 (LNAIGLKKYY…PQHPYTKALL (250 aa)) is the ABC transporter domain. Residue 54–61 (GESGCGKS) coordinates ATP.

This sequence belongs to the ABC transporter superfamily.

It localises to the cell inner membrane. It carries out the reaction a dipeptide(out) + ATP + H2O = a dipeptide(in) + ADP + phosphate + H(+). Functionally, part of the ABC transporter DppBCDF involved in dipeptide transport. Responsible for energy coupling to the transport system. The chain is Dipeptide transport ATP-binding protein DppF (dppF) from Haemophilus influenzae (strain ATCC 51907 / DSM 11121 / KW20 / Rd).